We begin with the raw amino-acid sequence, 158 residues long: Protein SREK1IP1 (158 aa).

2 disordered regions span residues methionine 1–tyrosine 20 and serine 45–aspartate 158. A CCHC-type zinc finger spans residues alanine 13–asparagine 30. A compositionally biased stretch (basic and acidic residues) spans alanine 59–lysine 79. Basic residues-rich tracts occupy residues glutamate 80 to serine 98 and lysine 111 to lysine 140. Positions serine 145–aspartate 158 are enriched in low complexity.

In terms of biological role, possible splicing regulator involved in the control of cellular survival. In Danio rerio (Zebrafish), this protein is Protein SREK1IP1 (srek1ip1).